A 430-amino-acid polypeptide reads, in one-letter code: Serine--tRNA ligase (430 aa).

T236–E238 is a binding site for L-serine. R267–E269 serves as a coordination point for ATP. E290 provides a ligand contact to L-serine. E354–S357 contacts ATP. L-serine is bound at residue S390.

It belongs to the class-II aminoacyl-tRNA synthetase family. Type-1 seryl-tRNA synthetase subfamily. Homodimer. The tRNA molecule binds across the dimer.

The protein resides in the cytoplasm. The enzyme catalyses tRNA(Ser) + L-serine + ATP = L-seryl-tRNA(Ser) + AMP + diphosphate + H(+). It carries out the reaction tRNA(Sec) + L-serine + ATP = L-seryl-tRNA(Sec) + AMP + diphosphate + H(+). It participates in aminoacyl-tRNA biosynthesis; selenocysteinyl-tRNA(Sec) biosynthesis; L-seryl-tRNA(Sec) from L-serine and tRNA(Sec): step 1/1. Its function is as follows. Catalyzes the attachment of serine to tRNA(Ser). Is also able to aminoacylate tRNA(Sec) with serine, to form the misacylated tRNA L-seryl-tRNA(Sec), which will be further converted into selenocysteinyl-tRNA(Sec). This chain is Serine--tRNA ligase, found in Idiomarina loihiensis (strain ATCC BAA-735 / DSM 15497 / L2-TR).